The sequence spans 123 residues: Large ribosomal subunit protein uL14 (123 aa).

The protein belongs to the universal ribosomal protein uL14 family. In terms of assembly, part of the 50S ribosomal subunit. Forms a cluster with proteins L3 and L19. In the 70S ribosome, L14 and L19 interact and together make contacts with the 16S rRNA in bridges B5 and B8.

Functionally, binds to 23S rRNA. Forms part of two intersubunit bridges in the 70S ribosome. The chain is Large ribosomal subunit protein uL14 from Escherichia coli O139:H28 (strain E24377A / ETEC).